The following is a 1317-amino-acid chain: Immunoglobulin superfamily member 1 (1317 aa).

A signal peptide spans 1–20; the sequence is MMLRTFTLLLLCIWLNPGMT. 5 consecutive Ig-like C2-type domains span residues 21 to 112, 114 to 211, 216 to 302, 311 to 398, and 400 to 481; these read SLAV…KILE, EAPG…KLVV, PKPT…SDIL, PKTW…ATYN, and VELM…HRSK. The Extracellular portion of the chain corresponds to 21-499; the sequence is SLAVESQPEL…GFLTWNSILN (479 aa). The N-linked (GlcNAc...) asparagine glycan is linked to N43. C48 and C96 are oxidised to a cystine. An intrachain disulfide couples C238 to C286. 2 N-linked (GlcNAc...) asparagine glycosylation sites follow: N328 and N371. 2 disulfides stabilise this stretch: C333/C382 and C422/C465. Residues 500–520 traverse the membrane as a helical segment; the sequence is EAVRVSLTMQLASLLLLVVWI. The Cytoplasmic segment spans residues 521–531; it reads RWKCRRLRLRE. A helical transmembrane segment spans residues 532-552; that stretch reads AWLLGTAQGVAMLFILMALLC. The Extracellular portion of the chain corresponds to 553 to 1317; it reads CGLCNGALTE…EVSVELTVPI (765 aa). Ig-like C2-type domains are found at residues 570 to 658, 659 to 753, 758 to 850, 854 to 938, 946 to 1041, 1046 to 1131, and 1142 to 1223; these read TPKP…ALEL, VGTD…ELVI, PKPF…LVVT, PKPT…SSLS, TDTF…ELIV, PKPS…NHSN, and PKPS…EPSD. An intrachain disulfide couples C780 to C830. N871 carries N-linked (GlcNAc...) asparagine glycosylation. A disulfide bond links C876 and C923. N-linked (GlcNAc...) asparagine glycosylation is found at N967 and N1063. Disulfide bonds link C1068/C1115 and C1164/C1207. A disordered region spans residues 1290–1310; the sequence is NQEGEPGTTTNSPSSASQEVS. The span at 1296-1309 shows a compositional bias: polar residues; that stretch reads GTTTNSPSSASQEV.

Interacts with INHA; the interaction is not confirmed by standard receptor binding assays. Interacts with ACVR1B; the interaction appears to be ligand-dependent as it is diminished by inhibin B and activin A. Interacts with ACVR2A, ACVR2B, ACVRL1 and BMPR1B. Interacts with HECTD1.

Its subcellular location is the membrane. It localises to the secreted. Its function is as follows. Seems to be a coreceptor in inhibin signaling, but seems not to be a high-affinity inhibin receptor. Antagonizes activin A signaling in the presence or absence of inhibin B. Necessary to mediate a specific antagonistic effect of inhibin B on activin-stimulated transcription. The protein is Immunoglobulin superfamily member 1 (Igsf1) of Mus musculus (Mouse).